Reading from the N-terminus, the 168-residue chain is Ribonuclease H (168 aa).

One can recognise an RNase H type-1 domain in the interval 10–151 (NNIPVKIYTD…ADKLATNGKI (142 aa)). Residues Asp-19, Glu-57, Asp-79, and Asp-143 each contribute to the Mg(2+) site.

This sequence belongs to the RNase H family. As to quaternary structure, monomer. Mg(2+) serves as cofactor.

The protein localises to the cytoplasm. The enzyme catalyses Endonucleolytic cleavage to 5'-phosphomonoester.. In terms of biological role, endonuclease that specifically degrades the RNA of RNA-DNA hybrids. This Orientia tsutsugamushi (strain Boryong) (Rickettsia tsutsugamushi) protein is Ribonuclease H.